A 637-amino-acid polypeptide reads, in one-letter code: Chaperone protein HtpG (637 aa).

The tract at residues methionine 1–arginine 348 is a; substrate-binding. A b region spans residues glutamate 349–lysine 565. The segment at leucine 566–alanine 637 is c.

Belongs to the heat shock protein 90 family. Homodimer.

It localises to the cytoplasm. Molecular chaperone. Has ATPase activity. The polypeptide is Chaperone protein HtpG (Idiomarina loihiensis (strain ATCC BAA-735 / DSM 15497 / L2-TR)).